We begin with the raw amino-acid sequence, 77 residues long: MAPSALLRPVSRLLAPARLPSGRASARSKFYVREPLNAKPDWLKVGFTLGTTVFLWVYLIKQHNEDILEYKRRNGLE.

A mitochondrion-targeting transit peptide spans M1–S28. The helical transmembrane segment at W42 to I60 threads the bilayer.

This sequence belongs to the complex I NDUFC1 subunit family. As to quaternary structure, complex I is composed of 45 different subunits.

Its subcellular location is the mitochondrion inner membrane. Accessory subunit of the mitochondrial membrane respiratory chain NADH dehydrogenase (Complex I), that is believed not to be involved in catalysis. Complex I functions in the transfer of electrons from NADH to the respiratory chain. The immediate electron acceptor for the enzyme is believed to be ubiquinone. This is NADH dehydrogenase [ubiquinone] 1 subunit C1, mitochondrial (NDUFC1) from Pongo pygmaeus (Bornean orangutan).